The chain runs to 475 residues: Serralysin G (475 aa).

The propeptide occupies 1 to 14; it reads MALYGKKTDLSSAS. Zn(2+) is bound at residue histidine 186. Residue glutamate 187 is part of the active site. Positions 190 and 226 each coordinate Zn(2+). Residues arginine 261, glycine 263, threonine 265, aspartate 293, glycine 295, glycine 296, aspartate 298, glutamate 337, glycine 342, glycine 344, aspartate 346, asparagine 351, asparagine 355, glycine 359, glycine 360, alanine 361, glycine 362, aspartate 364, glycine 368, glycine 370, glycine 371, aspartate 373, glycine 377, glycine 378, alanine 379, glycine 380, aspartate 382, aspartate 391, aspartate 398, and aspartate 408 each contribute to the Ca(2+) site. 2 Hemolysin-type calcium-binding repeats span residues 340–357 and 358–375; these read IGGSGHDVIVGNLSDNRI and DGGAGNDVLYGDGGADIL.

The protein belongs to the peptidase M10B family. The cofactor is Ca(2+). Zn(2+) is required as a cofactor.

Its subcellular location is the secreted. The catalysed reaction is Preferential cleavage of bonds with hydrophobic residues in P1'.. The polypeptide is Serralysin G (prtG) (Dickeya chrysanthemi (Pectobacterium chrysanthemi)).